The sequence spans 262 residues: Glutamate racemase (262 aa).

Residues 9-10 (DS) and 41-42 (YG) contribute to the substrate site. The active-site Proton donor/acceptor is Cys-73. 74 to 75 (NT) contacts substrate. Cys-180 functions as the Proton donor/acceptor in the catalytic mechanism. A substrate-binding site is contributed by 181-182 (TH).

This sequence belongs to the aspartate/glutamate racemases family.

The enzyme catalyses L-glutamate = D-glutamate. The protein operates within cell wall biogenesis; peptidoglycan biosynthesis. Functionally, provides the (R)-glutamate required for cell wall biosynthesis. In Aliivibrio fischeri (strain ATCC 700601 / ES114) (Vibrio fischeri), this protein is Glutamate racemase.